The chain runs to 198 residues: V-type ATP synthase subunit E 1 (198 aa).

The protein belongs to the V-ATPase E subunit family.

Functionally, produces ATP from ADP in the presence of a proton gradient across the membrane. The protein is V-type ATP synthase subunit E 1 of Clostridium tetani (strain Massachusetts / E88).